The sequence spans 355 residues: 3-dehydroquinate synthase (355 aa).

NAD(+) is bound by residues 71 to 76 (EGEERK), 105 to 109 (GVVGD), 129 to 130 (TS), Lys-142, and Lys-151. Glu-184, His-246, and His-263 together coordinate Zn(2+).

Belongs to the sugar phosphate cyclases superfamily. Dehydroquinate synthase family. Requires NAD(+) as cofactor. Co(2+) is required as a cofactor. The cofactor is Zn(2+).

Its subcellular location is the cytoplasm. It carries out the reaction 7-phospho-2-dehydro-3-deoxy-D-arabino-heptonate = 3-dehydroquinate + phosphate. It participates in metabolic intermediate biosynthesis; chorismate biosynthesis; chorismate from D-erythrose 4-phosphate and phosphoenolpyruvate: step 2/7. In terms of biological role, catalyzes the conversion of 3-deoxy-D-arabino-heptulosonate 7-phosphate (DAHP) to dehydroquinate (DHQ). This is 3-dehydroquinate synthase from Streptococcus pneumoniae (strain ATCC BAA-255 / R6).